We begin with the raw amino-acid sequence, 449 residues long: tRNA-2-methylthio-N(6)-dimethylallyladenosine synthase (449 aa).

In terms of domain architecture, MTTase N-terminal spans 3–124; that stretch reads KMLYIKTYGC…LPTMLEKLDS (122 aa). Residues cysteine 12, cysteine 48, cysteine 87, cysteine 163, cysteine 167, and cysteine 170 each coordinate [4Fe-4S] cluster. Positions 149–380 constitute a Radical SAM core domain; it reads KSPTVSGLVS…QAQLMLQQLE (232 aa). Residues 383-447 form the TRAM domain; sequence QKLIGKVVPV…ASSLFGEVCP (65 aa).

The protein belongs to the methylthiotransferase family. MiaB subfamily. Monomer. [4Fe-4S] cluster serves as cofactor.

It is found in the cytoplasm. It catalyses the reaction N(6)-dimethylallyladenosine(37) in tRNA + (sulfur carrier)-SH + AH2 + 2 S-adenosyl-L-methionine = 2-methylsulfanyl-N(6)-dimethylallyladenosine(37) in tRNA + (sulfur carrier)-H + 5'-deoxyadenosine + L-methionine + A + S-adenosyl-L-homocysteine + 2 H(+). In terms of biological role, catalyzes the methylthiolation of N6-(dimethylallyl)adenosine (i(6)A), leading to the formation of 2-methylthio-N6-(dimethylallyl)adenosine (ms(2)i(6)A) at position 37 in tRNAs that read codons beginning with uridine. The polypeptide is tRNA-2-methylthio-N(6)-dimethylallyladenosine synthase (Orientia tsutsugamushi (strain Boryong) (Rickettsia tsutsugamushi)).